The sequence spans 691 residues: Protein phosphatase 1 regulatory subunit 37 (691 aa).

The tract at residues Met-1–Ala-43 is disordered. Phosphoserine occurs at positions 50 and 56. LRR repeat units lie at residues Ser-220–Ala-240, Asn-248–Gly-269, Ser-277–Cys-297, Gly-306–Gly-326, and Ser-334–Lys-354. A disordered region spans residues Glu-460–Leu-662. Residues Pro-468–Glu-481 show a composition bias toward polar residues. The span at Ser-505–Arg-523 shows a compositional bias: acidic residues. Ser-561 carries the post-translational modification Phosphoserine. 2 stretches are compositionally biased toward pro residues: residues Pro-584–Pro-605 and Pro-620–Pro-634.

It belongs to the PPP1R37 family. As to quaternary structure, interacts with PPP1CA.

Its function is as follows. Inhibits phosphatase activity of protein phosphatase 1 (PP1) complexes. This Homo sapiens (Human) protein is Protein phosphatase 1 regulatory subunit 37 (PPP1R37).